A 333-amino-acid polypeptide reads, in one-letter code: Probable tRNA pseudouridine synthase B (333 aa).

A compositionally biased stretch (basic and acidic residues) spans 1–14; the sequence is MKCPSREVFSKFEE. The segment at 1 to 27 is disordered; it reads MKCPSREVFSKFEESTNPQWGKPPSQR. Residue aspartate 71 is the Nucleophile of the active site. The PUA domain occupies 238-313; sequence LPKIWVRDSA…LVARTDRVVM (76 aa).

This sequence belongs to the pseudouridine synthase TruB family. Type 2 subfamily.

It catalyses the reaction uridine(55) in tRNA = pseudouridine(55) in tRNA. Could be responsible for synthesis of pseudouridine from uracil-55 in the psi GC loop of transfer RNAs. This is Probable tRNA pseudouridine synthase B from Pyrobaculum aerophilum (strain ATCC 51768 / DSM 7523 / JCM 9630 / CIP 104966 / NBRC 100827 / IM2).